The primary structure comprises 230 residues: Modulator of macroautophagy TMEM150B-A (230 aa).

Residue methionine 1 is a topological domain, cytoplasmic. The chain crosses the membrane as a helical span at residues 2–22 (WAWALLPICLTIWATAGIWIV). The Extracellular portion of the chain corresponds to 23–50 (YGMSVSNGSVNLSDGFPYISLCGTDPPQ). N-linked (GlcNAc...) asparagine glycosylation is found at asparagine 29 and asparagine 33. The helical transmembrane segment at 51–71 (SCVFGQVLNVGAMLGVWISAI) threads the bilayer. The Cytoplasmic portion of the chain corresponds to 72 to 83 (RFQQIRDYNCHS). A helical membrane pass occupies residues 84 to 104 (VLNSVSLAMGILCALGTSIVG). Topologically, residues 105 to 115 (NFQQSNQLETH) are extracellular. The chain crosses the membrane as a helical span at residues 116–136 (LAGAFLAFVIGNIYFWMQTAL). The Cytoplasmic segment spans residues 137 to 150 (TYMVKPTHGGCYIG). The chain crosses the membrane as a helical span at residues 151 to 171 (PIRFCLSVACTALIVLMAVFL). Over 172 to 183 (KMNMKSISAICE) the chain is Extracellular. Residues 184–204 (WIVAMILFLLYGLFAVDFWHL) form a helical membrane-spanning segment. At 205 to 230 (DGHYFHVKKRTVIPNEMQVSTVTLSI) the chain is on the cytoplasmic side.

It belongs to the DRAM/TMEM150 family.

It is found in the cell membrane. The protein localises to the endosome membrane. It localises to the cytoplasmic vesicle. The protein resides in the autophagosome membrane. Its function is as follows. Modulator of macroautophagy that causes accumulation of autophagosomes under basal conditions and enhances autophagic flux. Represses cell death and promotes long-term clonogenic survival of cells grown in the absence of glucose in a macroautophagy-independent manner. May have some role in extracellular matrix engulfment or growth factor receptor recycling, both of which can modulate cell survival. The protein is Modulator of macroautophagy TMEM150B-A of Xenopus laevis (African clawed frog).